The primary structure comprises 555 residues: L-ascorbate oxidase homolog (555 aa).

A signal peptide spans 1–23; it reads MRGVKLLAACLYLAAAATVVVHA. 2 Plastocyanin-like domains span residues 25-145 and 158-301; these read DPYF…LRVN and EDDY…RYEG. Asparagine 33, asparagine 61, and asparagine 110 each carry an N-linked (GlcNAc...) asparagine glycan. A disulfide bridge connects residues cysteine 103 and cysteine 539. 3 N-linked (GlcNAc...) asparagine glycosylation sites follow: asparagine 330, asparagine 350, and asparagine 422. The Plastocyanin-like 3 domain occupies 345–524; sequence HYGKINITRT…LYASVLSPEK (180 aa).

This sequence belongs to the multicopper oxidase family. Maximal expression in early binucleate microspores; declines considerably in mature trinucleate pollen.

It is found in the secreted. Functionally, probable oxidase that may be involved in pollen tube growth. The polypeptide is L-ascorbate oxidase homolog (Bp10) (Brassica napus (Rape)).